Reading from the N-terminus, the 331-residue chain is Biotin synthase (331 aa).

The 226-residue stretch at 39-264 (SELQTCYLIS…VFPRSMVRLA (226 aa)) folds into the Radical SAM core domain. 3 residues coordinate [4Fe-4S] cluster: Cys-54, Cys-58, and Cys-61. [2Fe-2S] cluster contacts are provided by Cys-98, Cys-130, Cys-190, and Arg-262.

The protein belongs to the radical SAM superfamily. Biotin synthase family. In terms of assembly, homodimer. Requires [4Fe-4S] cluster as cofactor. The cofactor is [2Fe-2S] cluster.

It catalyses the reaction (4R,5S)-dethiobiotin + (sulfur carrier)-SH + 2 reduced [2Fe-2S]-[ferredoxin] + 2 S-adenosyl-L-methionine = (sulfur carrier)-H + biotin + 2 5'-deoxyadenosine + 2 L-methionine + 2 oxidized [2Fe-2S]-[ferredoxin]. It participates in cofactor biosynthesis; biotin biosynthesis; biotin from 7,8-diaminononanoate: step 2/2. Catalyzes the conversion of dethiobiotin (DTB) to biotin by the insertion of a sulfur atom into dethiobiotin via a radical-based mechanism. The sequence is that of Biotin synthase from Chlamydia pneumoniae (Chlamydophila pneumoniae).